The sequence spans 93 residues: UPF0473 protein RBAM_024480 (93 aa).

This sequence belongs to the UPF0473 family.

This Bacillus velezensis (strain DSM 23117 / BGSC 10A6 / LMG 26770 / FZB42) (Bacillus amyloliquefaciens subsp. plantarum) protein is UPF0473 protein RBAM_024480.